Here is a 156-residue protein sequence, read N- to C-terminus: Probable succinate transporter subunit YjjB (156 aa).

A run of 4 helical transmembrane segments spans residues 7 to 27, 54 to 74, 86 to 106, and 128 to 148; these read WALL…AMVF, FGMN…IIGI, VFTV…TAMI, and FLKA…PGIW.

The protein belongs to the ThrE exporter (TC 2.A.79) family. The transporter is composed of YjjB and YjjP.

It is found in the cell inner membrane. Functionally, involved in succinate export with YjjP. Both proteins are required for export. The sequence is that of Probable succinate transporter subunit YjjB from Pectobacterium carotovorum subsp. carotovorum (strain PC1).